The following is a 422-amino-acid chain: 5'-deoxyadenosine deaminase (422 aa).

Positions 57 and 59 each coordinate Zn(2+). Positions 86 and 178 each coordinate substrate. Residue His-205 coordinates Zn(2+). 2 residues coordinate substrate: Glu-208 and Asp-294. Asp-294 is a Zn(2+) binding site.

It belongs to the metallo-dependent hydrolases superfamily. MTA/SAH deaminase family. As to quaternary structure, homotetramer. It depends on Zn(2+) as a cofactor.

It catalyses the reaction 5'-deoxyadenosine + H2O + H(+) = 5'-deoxyinosine + NH4(+). The enzyme catalyses S-adenosyl-L-homocysteine + H2O + H(+) = S-inosyl-L-homocysteine + NH4(+). It carries out the reaction S-methyl-5'-thioadenosine + H2O + H(+) = S-methyl-5'-thioinosine + NH4(+). The catalysed reaction is adenosine + H2O + H(+) = inosine + NH4(+). It functions in the pathway amino-acid biosynthesis; S-adenosyl-L-methionine biosynthesis. Its function is as follows. Catalyzes the deamination of three SAM-derived enzymatic products, namely 5'-deoxyadenosine, S-adenosyl-L-homocysteine, and 5'-methylthioadenosine, to produce the inosine analogs. Can also deaminate adenosine. The preferred substrate for this enzyme is 5'-deoxyadenosine, but all these substrates are efficiently deaminated. Likely functions in a S-adenosyl-L-methionine (SAM) recycling pathway from S-adenosyl-L-homocysteine (SAH) produced from SAM-dependent methylation reactions. May also be involved in the recycling of 5'-deoxyadenosine, whereupon the 5'-deoxyribose moiety of 5'-deoxyinosine is further metabolized to deoxyhexoses used for the biosynthesis of aromatic amino acids in methanogens. The polypeptide is 5'-deoxyadenosine deaminase (Methanococcus maripaludis (strain C5 / ATCC BAA-1333)).